A 709-amino-acid polypeptide reads, in one-letter code: ATP-binding cassette sub-family F member 3 (709 aa).

Ala2 bears the N-acetylalanine mark. At Ser83 the chain carries Phosphoserine. The segment covering 129 to 143 (RLKAKQEKRSEKETL) has biased composition (basic and acidic residues). The interval 129–171 (RLKAKQEKRSEKETLKTSNPLVLEEASASQAGSRKESRLESSG) is disordered. 3 positions are modified to phosphoserine: Ser155, Ser157, and Ser161. Positions 161–171 (SRKESRLESSG) are enriched in basic and acidic residues. ABC transporter domains lie at 178–424 (VRIE…LNQQ) and 492–707 (LQLD…RREG). 210–217 (GRNGLGKT) contacts ATP. Ser283 is modified (phosphoserine). Residue 525–532 (GENGAGKS) coordinates ATP.

This sequence belongs to the ABC transporter superfamily. ABCF family. EF3 subfamily.

Functionally, displays an antiviral effect against flaviviruses such as west Nile virus (WNV) in the presence of OAS1B. The protein is ATP-binding cassette sub-family F member 3 (Abcf3) of Mus musculus (Mouse).